Reading from the N-terminus, the 368-residue chain is Phospho-N-acetylmuramoyl-pentapeptide-transferase (368 aa).

9 consecutive transmembrane segments (helical) span residues 30–50 (AAAITALLITLFVGPGFIKYL), 72–92 (LPTMGGLLIIFSIEISVLLWS), 95–115 (IDPHVWLIMLAILWMGIIGFI), 139–159 (VTLGLVVGCYTWYDPSFSVLL), 169–189 (YLTIDYGYFYIPIVIFIITAV), 208–228 (AIVVMGLGGFSYLAGNAVYAV), 238–258 (GGEIAVVSMAIVMACVGFLWF), 264–286 (EIIMGDTGSLALGSAIAVIALLI), and 345–365 (KIVIRFWILTILFFLASLMTL).

It belongs to the glycosyltransferase 4 family. MraY subfamily. Mg(2+) serves as cofactor.

Its subcellular location is the cell inner membrane. The enzyme catalyses UDP-N-acetyl-alpha-D-muramoyl-L-alanyl-gamma-D-glutamyl-meso-2,6-diaminopimeloyl-D-alanyl-D-alanine + di-trans,octa-cis-undecaprenyl phosphate = di-trans,octa-cis-undecaprenyl diphospho-N-acetyl-alpha-D-muramoyl-L-alanyl-D-glutamyl-meso-2,6-diaminopimeloyl-D-alanyl-D-alanine + UMP. It participates in cell wall biogenesis; peptidoglycan biosynthesis. Its function is as follows. Catalyzes the initial step of the lipid cycle reactions in the biosynthesis of the cell wall peptidoglycan: transfers peptidoglycan precursor phospho-MurNAc-pentapeptide from UDP-MurNAc-pentapeptide onto the lipid carrier undecaprenyl phosphate, yielding undecaprenyl-pyrophosphoryl-MurNAc-pentapeptide, known as lipid I. The sequence is that of Phospho-N-acetylmuramoyl-pentapeptide-transferase from Pelodictyon phaeoclathratiforme (strain DSM 5477 / BU-1).